The primary structure comprises 776 residues: Ecdysone receptor (776 aa).

The modulating stretch occupies residues 1–290 (MYRLNIVSTN…GPTPRQQEEL (290 aa)). The disordered stretch occupies residues 199–283 (NEEWISSPSP…DAKKQKKGPT (85 aa)). Residues 204–213 (SSPSPGSVPG) show a composition bias toward low complexity. 2 stretches are compositionally biased toward polar residues: residues 227–245 (TTYTTTMSNGYSSPMSTGS) and 261–270 (SPSSSLNGYT). The nuclear receptor DNA-binding region spans 288 to 363 (EELCLVCGDR…VGMRPECVVP (76 aa)). NR C4-type zinc fingers lie at residues 291–311 (CLVCGDRESGYHYNALTCEGC) and 327–346 (CKFGHACEMDMYMRRKCQEC). Residues 437–673 (NQMAVIYKLI…FLEEIWDVQD (237 aa)) enclose the NR LBD domain. Residues 679–688 (QAQMHSHGTQ) are compositionally biased toward polar residues. Residues 679–776 (QAQMHSHGTQ…VPGLGMLDQV (98 aa)) form a disordered region. Low complexity predominate over residues 689 to 745 (SSSSSSSSSSSSSNGSSNGNSSSNSNSSQHGPHPHPHGQQLTPNQQQHQQQHSQLQQ).

This sequence belongs to the nuclear hormone receptor family. NR1 subfamily. In terms of assembly, heterodimer of USP and ECR. Only the heterodimer is capable of high-affinity binding to ecdysone. In terms of tissue distribution, a peak level expression is seen in the fat body of previtellogenic female mosquitos at one and two days after eclosion, levels fall three-fold at three days posteclosion.

The protein resides in the nucleus. Its function is as follows. Receptor for ecdysone. Binds to ecdysone response elements (ECRES). The chain is Ecdysone receptor (EcR) from Aedes aegypti (Yellowfever mosquito).